The sequence spans 67 residues: Type 3 secretion system chaperone PscE (67 aa).

Residues 16-37 (HAAALRQRLQAALAECRRELAR) are a coiled coil.

The protein belongs to the YscE family. As to quaternary structure, forms a stable ternary complex with PscF/SctF and PscG within the cytoplasm. Co-stabilized by PscG.

Its subcellular location is the cytoplasm. In terms of biological role, chaperone of the type III secretion system (T3SS), also called injectisome, which is used to inject bacterial effector proteins into eukaryotic host cells, facilitating the establishment and dissemination of infection. Along with PscG, prevents premature polymerization of the PscF/SctF needle protein within the cytoplasm. Required for type III secretion needle assembly. Also required for cytotoxicity by influencing PscF/SctF levels. The sequence is that of Type 3 secretion system chaperone PscE (pscE) from Pseudomonas aeruginosa (strain ATCC 15692 / DSM 22644 / CIP 104116 / JCM 14847 / LMG 12228 / 1C / PRS 101 / PAO1).